The following is an 83-amino-acid chain: uncharacterized protein (83 aa).

This is an uncharacterized protein from Rickettsia prowazekii (strain Madrid E).